We begin with the raw amino-acid sequence, 205 residues long: Peptidyl-tRNA hydrolase (205 aa).

Tyrosine 17 is a tRNA binding site. Histidine 22 (proton acceptor) is an active-site residue. TRNA contacts are provided by tyrosine 73 and asparagine 75.

The protein belongs to the PTH family. As to quaternary structure, monomer.

Its subcellular location is the cytoplasm. The enzyme catalyses an N-acyl-L-alpha-aminoacyl-tRNA + H2O = an N-acyl-L-amino acid + a tRNA + H(+). In terms of biological role, hydrolyzes ribosome-free peptidyl-tRNAs (with 1 or more amino acids incorporated), which drop off the ribosome during protein synthesis, or as a result of ribosome stalling. Functionally, catalyzes the release of premature peptidyl moieties from peptidyl-tRNA molecules trapped in stalled 50S ribosomal subunits, and thus maintains levels of free tRNAs and 50S ribosomes. This chain is Peptidyl-tRNA hydrolase, found in Maridesulfovibrio salexigens (strain ATCC 14822 / DSM 2638 / NCIMB 8403 / VKM B-1763) (Desulfovibrio salexigens).